We begin with the raw amino-acid sequence, 269 residues long: 2-dehydro-3-deoxyphosphooctonate aldolase (269 aa).

Belongs to the KdsA family.

The protein localises to the cytoplasm. The enzyme catalyses D-arabinose 5-phosphate + phosphoenolpyruvate + H2O = 3-deoxy-alpha-D-manno-2-octulosonate-8-phosphate + phosphate. It functions in the pathway carbohydrate biosynthesis; 3-deoxy-D-manno-octulosonate biosynthesis; 3-deoxy-D-manno-octulosonate from D-ribulose 5-phosphate: step 2/3. The protein operates within bacterial outer membrane biogenesis; lipopolysaccharide biosynthesis. The sequence is that of 2-dehydro-3-deoxyphosphooctonate aldolase from Chlamydia trachomatis serovar L2 (strain ATCC VR-902B / DSM 19102 / 434/Bu).